The sequence spans 323 residues: Calcium homeostasis modulator protein 2 (323 aa).

Residues 1–21 are Cytoplasmic-facing; that stretch reads MAALIAENFRFLSLFFKSKDV. A central pore region spans residues 14 to 39; that stretch reads LFFKSKDVMIFNGLVALGTVGSQELF. A helical transmembrane segment spans residues 22–43; that stretch reads MIFNGLVALGTVGSQELFSVVA. The Extracellular segment spans residues 44–52; the sequence is FHCPCSPAR. 2 disulfides stabilise this stretch: cysteine 46-cysteine 130 and cysteine 48-cysteine 162. Residues 53–76 traverse the membrane as a helical segment; the sequence is NYLYGLAAIGVPALVLFIIGIILN. Residues 77-101 are Cytoplasmic-facing; it reads NHTWNLVAECQHRRTKNCSAAPTFL. Residues 102-132 form a helical membrane-spanning segment; that stretch reads LLSSILGRAAVAPVTWSVISLLRGEAYVCAL. Over 133 to 179 the chain is Extracellular; it reads SEFVDPSSLTAREEHFPSAHATEILARFPCKENPDNLSDFREEVSRR. A hemichannel docking region spans residues 145-152; sequence EEHFPSAH. The helical transmembrane segment at 180–206 threads the bilayer; it reads LRYESQLFGWLLIGVVAILVFLTKCLK. Residues 207–323 lie on the Cytoplasmic side of the membrane; it reads HYCSPLSYRQ…DNVEMALLPS (117 aa). The segment at 214–251 is intersubunit interaction; sequence YRQEAYWAQYRANEDQLFQRTAEVHSRVLAANNVRRFF.

It belongs to the CALHM family. As to quaternary structure, homo-undecamer. Two undecameric hemichannels can assemble in a head-to-head manner to form a gap junction. In terms of tissue distribution, placenta.

It localises to the cell membrane. It carries out the reaction ATP(in) = ATP(out). Inhibited by Ca(2+) and ruthenium red in a voltage-dependent way. In terms of biological role, pore-forming subunit of Ca(2+) homeostasis modulator channels. Mediates ATP release from astrocytes and ATP-induced Ca(2+) influx in microglia thus regulating neuronal ATP and Ca(2+) homeostasis, synaptic transmission and neuroinflammatory response. May form intercellular gap junctions. The gating mechanism remains unknown. The sequence is that of Calcium homeostasis modulator protein 2 from Homo sapiens (Human).